We begin with the raw amino-acid sequence, 465 residues long: CUGBP Elav-like family member 3 (465 aa).

RRM domains follow at residues 7–88 and 95–174; these read IKLF…PADS and KLFV…FADT. Disordered stretches follow at residues 283–311 and 345–379; these read PVPTQPTGQPAPDALYPNGVHPYPAQSPA and PPALVAQQPPPPPQQQQQQQQQQQQQQQQREGPDG. Residues 345–358 show a composition bias toward pro residues; that stretch reads PPALVAQQPPPPPQ. Residues 359–373 show a composition bias toward low complexity; that stretch reads QQQQQQQQQQQQQQQ. An RRM 3 domain is found at 380–458; sequence CNIFIYHLPQ…KRLKVQLKRP (79 aa).

Belongs to the CELF/BRUNOL family.

Its subcellular location is the nucleus. It is found in the cytoplasm. Functionally, RNA-binding protein involved in the regulation of pre-mRNA alternative splicing. Mediates exon inclusion and/or exclusion in pre-mRNA that are subject to tissue-specific and developmentally regulated alternative splicing. Specifically activates exon 5 inclusion of cardiac isoforms of TNNT2 during heart remodeling at the juvenile to adult transition. Activates the splicing of MAPT/Tau exon 10. Binds to muscle-specific splicing enhancer (MSE) intronic sites flanking the alternative exon 5 of TNNT2 pre-mRNA. The polypeptide is CUGBP Elav-like family member 3 (Celf3) (Mus musculus (Mouse)).